A 450-amino-acid chain; its full sequence is UDP-N-acetylmuramoylalanine--D-glutamate ligase (450 aa).

119–125 contacts ATP; sequence GTNGKTT.

The protein belongs to the MurCDEF family.

It localises to the cytoplasm. The catalysed reaction is UDP-N-acetyl-alpha-D-muramoyl-L-alanine + D-glutamate + ATP = UDP-N-acetyl-alpha-D-muramoyl-L-alanyl-D-glutamate + ADP + phosphate + H(+). It functions in the pathway cell wall biogenesis; peptidoglycan biosynthesis. Its function is as follows. Cell wall formation. Catalyzes the addition of glutamate to the nucleotide precursor UDP-N-acetylmuramoyl-L-alanine (UMA). This chain is UDP-N-acetylmuramoylalanine--D-glutamate ligase, found in Lactococcus lactis subsp. lactis (strain IL1403) (Streptococcus lactis).